The following is a 445-amino-acid chain: uncharacterized protein (445 aa).

Helical transmembrane passes span 16–36, 52–72, 98–118, 168–188, 219–239, 243–263, 283–303, and 366–386; these read IVSL…AFLI, LLAS…GYLL, VHSL…AGGC, GLMF…LGIV, ASAL…VWLI, GWSV…GALG, LIAA…NEGS, and AAYP…VPLV. Residues 417 to 445 are disordered; the sequence is AWPNGPRRPGPPGQPRRVRQGGTAITPPT.

This sequence belongs to the major facilitator superfamily.

It is found in the cell membrane. This is an uncharacterized protein from Mycobacterium tuberculosis (strain CDC 1551 / Oshkosh).